The primary structure comprises 501 residues: Ribose import ATP-binding protein RbsA 1 (501 aa).

ABC transporter domains are found at residues 5 to 241 (LQLK…VGRK) and 252 to 495 (APGD…VGKL). 37 to 44 (GENGAGKS) contacts ATP.

Belongs to the ABC transporter superfamily. Ribose importer (TC 3.A.1.2.1) family. The complex is composed of an ATP-binding protein (RbsA), two transmembrane proteins (RbsC) and a solute-binding protein (RbsB).

It is found in the cell inner membrane. The catalysed reaction is D-ribose(out) + ATP + H2O = D-ribose(in) + ADP + phosphate + H(+). In terms of biological role, part of the ABC transporter complex RbsABC involved in ribose import. Responsible for energy coupling to the transport system. The sequence is that of Ribose import ATP-binding protein RbsA 1 from Escherichia coli O157:H7.